The primary structure comprises 553 residues: CDP-diacylglycerol--glycerol-3-phosphate 3-phosphatidyltransferase, mitochondrial (553 aa).

The N-terminal 25 residues, 1–25, are a transit peptide targeting the mitochondrion; it reads MAAPAAGPVFWRRLLGLLPGRPGLA. A Phosphoserine modification is found at Ser-46. ATP is bound at residue 121–128; that stretch reads ASLYLGTG. PLD phosphodiesterase domains are found at residues 212-238 and 457-490; these read TIGL…SDSY and TGWT…GYRS. Residues His-217, Lys-219, and Asp-224 contribute to the active site.

Belongs to the CDP-alcohol phosphatidyltransferase class-II family.

Its subcellular location is the mitochondrion. It catalyses the reaction a CDP-1,2-diacyl-sn-glycerol + sn-glycerol 3-phosphate = a 1,2-diacyl-sn-glycero-3-phospho-(1'-sn-glycero-3'-phosphate) + CMP + H(+). Its pathway is phospholipid metabolism; phosphatidylglycerol biosynthesis; phosphatidylglycerol from CDP-diacylglycerol: step 1/2. With respect to regulation, activated by calcium and magnesium and inhibited by other bivalent cations. Functionally, functions in the biosynthesis of the anionic phospholipids phosphatidylglycerol and cardiolipin. The polypeptide is CDP-diacylglycerol--glycerol-3-phosphate 3-phosphatidyltransferase, mitochondrial (PGS1) (Cricetulus griseus (Chinese hamster)).